A 431-amino-acid chain; its full sequence is Glucose-1-phosphate adenylyltransferase (431 aa).

Residue Lys-39 participates in beta-D-fructose 1,6-bisphosphate binding. 3 residues coordinate AMP: Arg-40, His-46, and Arg-52. Alpha-D-glucose 1-phosphate is bound at residue Tyr-114. Position 130 (Arg-130) interacts with AMP. Residues Gly-179, 194 to 195, and Ser-212 each bind alpha-D-glucose 1-phosphate; that span reads EK. The AMP site is built by Glu-370 and Arg-386. Beta-D-fructose 1,6-bisphosphate is bound by residues 419 to 423 and 429 to 431; these read REMLR and QER.

This sequence belongs to the bacterial/plant glucose-1-phosphate adenylyltransferase family. Homotetramer.

The catalysed reaction is alpha-D-glucose 1-phosphate + ATP + H(+) = ADP-alpha-D-glucose + diphosphate. It participates in glycan biosynthesis; glycogen biosynthesis. Its activity is regulated as follows. Allosterically activated by fructose-1,6-bisphosphate (F16BP) and inhibited by AMP. Functionally, involved in the biosynthesis of ADP-glucose, a building block required for the elongation reactions to produce glycogen. Catalyzes the reaction between ATP and alpha-D-glucose 1-phosphate (G1P) to produce pyrophosphate and ADP-Glc. In Escherichia fergusonii (strain ATCC 35469 / DSM 13698 / CCUG 18766 / IAM 14443 / JCM 21226 / LMG 7866 / NBRC 102419 / NCTC 12128 / CDC 0568-73), this protein is Glucose-1-phosphate adenylyltransferase.